Reading from the N-terminus, the 106-residue chain is ATP-dependent Clp protease adapter protein ClpS (106 aa).

Belongs to the ClpS family. As to quaternary structure, binds to the N-terminal domain of the chaperone ClpA.

Its function is as follows. Involved in the modulation of the specificity of the ClpAP-mediated ATP-dependent protein degradation. This chain is ATP-dependent Clp protease adapter protein ClpS, found in Salmonella arizonae (strain ATCC BAA-731 / CDC346-86 / RSK2980).